Here is a 315-residue protein sequence, read N- to C-terminus: Olfactory receptor 8J3 (315 aa).

The Extracellular segment spans residues 1–25 (MAPENFTRVTEFILTGVSSCPELQI). Residue N5 is glycosylated (N-linked (GlcNAc...) asparagine). A helical membrane pass occupies residues 26-46 (PLFLVFLVLYVLTMAGNLGII). Topologically, residues 47–54 (TLTSVDSR) are cytoplasmic. The chain crosses the membrane as a helical span at residues 55–75 (LQNPMYFFLRHLAIINLGNST). Over 76-99 (VIAPKMLMNFLVKKKTTSFYECAT) the chain is Extracellular. C97 and C189 are joined by a disulfide. Residues 100-120 (QLGGFLFFIVSEVMMLAVMAY) form a helical membrane-spanning segment. The Cytoplasmic portion of the chain corresponds to 121-139 (DRYVAICNPLLYMVVVSRR). Residues 140 to 160 (LCLLLVSLTYLYGFSTAIVVS) form a helical membrane-spanning segment. At 161–197 (PCIFSVSYCSSNIINHFYCDIAPLLALSCSDTYIPET) the chain is on the extracellular side. Residues 198–217 (IVFISAATNLVFSMITVLVS) form a helical membrane-spanning segment. Over 218-237 (YFNIVLSILRIRSPEGRKKA) the chain is Cytoplasmic. The chain crosses the membrane as a helical span at residues 238–258 (FSTCASHMIAVTVFYGTMLFM). Residues 259 to 271 (YLQPQTNHSLDTD) are Extracellular-facing. N265 is a glycosylation site (N-linked (GlcNAc...) asparagine). A helical membrane pass occupies residues 272–292 (KMASVFYTLVIPMLNPLIYSL). The Cytoplasmic segment spans residues 293 to 315 (RNNDVNVALKKFMENPCYSFKSM).

This sequence belongs to the G-protein coupled receptor 1 family.

The protein resides in the cell membrane. Odorant receptor. This chain is Olfactory receptor 8J3 (OR8J3), found in Homo sapiens (Human).